A 492-amino-acid chain; its full sequence is N-succinylglutamate 5-semialdehyde dehydrogenase (492 aa).

220–225 (GSANTG) is a binding site for NAD(+). Residues glutamate 243 and cysteine 277 contribute to the active site.

Belongs to the aldehyde dehydrogenase family. AstD subfamily.

The catalysed reaction is N-succinyl-L-glutamate 5-semialdehyde + NAD(+) + H2O = N-succinyl-L-glutamate + NADH + 2 H(+). It participates in amino-acid degradation; L-arginine degradation via AST pathway; L-glutamate and succinate from L-arginine: step 4/5. In terms of biological role, catalyzes the NAD-dependent reduction of succinylglutamate semialdehyde into succinylglutamate. The protein is N-succinylglutamate 5-semialdehyde dehydrogenase of Escherichia coli (strain 55989 / EAEC).